The following is a 680-amino-acid chain: Tumor protein 63 (680 aa).

Positions 1–107 (MNFETSRCAT…MQDSDLSDPM (107 aa)) are transcription activation. The span at 123 to 157 (QIQNGSSSTSPYNTDHAQNSVTAPSPYAQPSSTFD) shows a compositional bias: polar residues. A disordered region spans residues 123–171 (QIQNGSSSTSPYNTDHAQNSVTAPSPYAQPSSTFDALSPSPAIPSNTDY). The DNA-binding element occupies 170 to 362 (DYPGPHSFDV…KADEDSIRKQ (193 aa)). Zn(2+) is bound by residues cysteine 244, histidine 247, cysteine 308, and cysteine 312. Basic and acidic residues predominate over residues 351–360 (DRKADEDSIR). 2 disordered regions span residues 351–393 (DRKA…IKKR) and 435–472 (YRQQQQQQHQHLLQKQTSIQSPSSYGNSSPPLNKMNSM). Residues 352–388 (RKADEDSIRKQQVSDSTKNGDGTKRPFRQNTHGIQMT) are interaction with HIPK2. Composition is skewed to polar residues over residues 361 to 371 (KQQVSDSTKNG) and 379 to 389 (RQNTHGIQMTS). An oligomerization region spans residues 394–443 (RSPDDELLYLPVRGRETYEMLLKIKESLELMQYLPQHTIETYRQQQQQQH). Positions 437-450 (QQQQQQHQHLLQKQ) are enriched in low complexity. Residues 451–472 (TSIQSPSSYGNSSPPLNKMNSM) show a composition bias toward polar residues. The 67-residue stretch at 541–607 (PPYPTDCSIV…WKGILDHRQL (67 aa)) folds into the SAM domain. A transactivation inhibition region spans residues 610–680 (FSSPSHLLRT…KQQRIKEEGE (71 aa)). Lysine 676 is covalently cross-linked (Glycyl lysine isopeptide (Lys-Gly) (interchain with G-Cter in SUMO)).

It belongs to the p53 family. As to quaternary structure, binds DNA as a homotetramer. Isoform composition of the tetramer may determine transactivation activity. Isoforms Alpha and Gamma interact with HIPK2. Interacts with SSRP1, leading to stimulate coactivator activity. Isoform 1 and isoform 2 interact with WWP1. Interacts with PDS5A. Isoform 5 (via activation domain) interacts with NOC2L. Zn(2+) is required as a cofactor. Post-translationally, may be sumoylated. Ubiquitinated. Polyubiquitination involves WWP1 and leads to proteasomal degradation of this protein. In terms of tissue distribution, widely expressed, notably in heart, kidney, placenta, prostate, skeletal muscle, testis and thymus, although the precise isoform varies according to tissue type. Progenitor cell layers of skin, breast, eye and prostate express high levels of DeltaN-type isoforms. Isoform 10 is predominantly expressed in skin squamous cell carcinomas, but not in normal skin tissues.

It is found in the nucleus. Acts as a sequence specific DNA binding transcriptional activator or repressor. The isoforms contain a varying set of transactivation and auto-regulating transactivation inhibiting domains thus showing an isoform specific activity. Isoform 2 activates RIPK4 transcription. May be required in conjunction with TP73/p73 for initiation of p53/TP53 dependent apoptosis in response to genotoxic insults and the presence of activated oncogenes. Involved in Notch signaling by probably inducing JAG1 and JAG2. Plays a role in the regulation of epithelial morphogenesis. The ratio of DeltaN-type and TA*-type isoforms may govern the maintenance of epithelial stem cell compartments and regulate the initiation of epithelial stratification from the undifferentiated embryonal ectoderm. Required for limb formation from the apical ectodermal ridge. Activates transcription of the p21 promoter. In Homo sapiens (Human), this protein is Tumor protein 63 (TP63).